Here is an 845-residue protein sequence, read N- to C-terminus: Proto-oncogene vav (845 aa).

A Calponin-homology (CH) domain is found at Met-1–Pro-119. A DH domain is found at Lys-194–Val-373. Positions Arg-402–Ser-504 constitute a PH domain. The segment at Gly-515 to Cys-564 adopts a Phorbol-ester/DAG-type zinc-finger fold. Positions Leu-592–His-660 constitute an SH3 1 domain. In terms of domain architecture, SH2 spans Trp-671–Phe-765. Positions Lys-782 to Ser-842 constitute an SH3 2 domain. Phosphotyrosine occurs at positions 826 and 844.

Interacts with SHB. Interacts with SH2B2, GRB2, GRB3, DOCK2, SLA, TEC and ZNF655/VIK. Interacts with SIAH2; without leading to its degradation. Associates with BLNK, PLCG1, GRB2 and NCK1 in a B-cell antigen receptor-dependent fashion. Interacts with CBLB; which inhibits tyrosine phosphorylation and down-regulates activity. May interact with CCPG1. Interacts with CLNK. Interacts with THEMIS2. Interacts with NEK3 and this interaction is prolactin-dependent. Interacts with ITK. Interacts with PTK2B/PYK2. Interacts with HCK. Interacts with PTK2B/PYK2. Interacts (via SH2 domain) with SYK. Interacts with ANKRD54. Interacts with CD6. Interacts with isoform 2 of CRACR2A. Interacts with LCP2; this interaction plays a role in TCR-mediated cytokine production. In terms of processing, phosphorylated on tyrosine residues by HCK in response to IFNG and bacterial lipopolysaccharide (LPS). Phosphorylated by FYN. In terms of tissue distribution, widely expressed in hematopoietic cells but not in other cell types.

Its function is as follows. Couples tyrosine kinase signals with the activation of the Rho/Rac GTPases, thus leading to cell differentiation and/or proliferation. The chain is Proto-oncogene vav (VAV1) from Homo sapiens (Human).